Reading from the N-terminus, the 77-residue chain is uncharacterized protein (77 aa).

Residues 53–77 (KRVSSEANKEKSDITELLRKQVRPD) are disordered.

This is an uncharacterized protein from Escherichia coli (strain K12).